Reading from the N-terminus, the 317-residue chain is Ribose-phosphate pyrophosphokinase (317 aa).

ATP contacts are provided by residues 43 to 45 (DGE) and 102 to 103 (RQ). The ADP site is built by Lys106 and Arg110. Position 136 (His136) interacts with Mg(2+). Residues Gln141 and 149–150 (DH) contribute to the ADP site. Position 175 (Asp175) interacts with Mg(2+). Lys198 is a catalytic residue. Residues Arg200, Asp224, and 228 to 232 (DTAGT) contribute to the D-ribose 5-phosphate site. Residue 311-313 (SVS) participates in ADP binding.

This sequence belongs to the ribose-phosphate pyrophosphokinase family. Class I subfamily. In terms of assembly, homohexamer; trimer of dimers. Mg(2+) serves as cofactor.

It is found in the cytoplasm. It carries out the reaction D-ribose 5-phosphate + ATP = 5-phospho-alpha-D-ribose 1-diphosphate + AMP + H(+). It functions in the pathway metabolic intermediate biosynthesis; 5-phospho-alpha-D-ribose 1-diphosphate biosynthesis; 5-phospho-alpha-D-ribose 1-diphosphate from D-ribose 5-phosphate (route I): step 1/1. Its activity is regulated as follows. Activated by inorganic phosphate, and to a lesser extent by sulfate ions. In addition to form a complex with ATP, Mg(2+) also acts as a cofactor. Strongly inhibited by ADP through competitive binding at the activation site and at a specific allosteric site. Less strongly inhibited by alpha,beta-methylene ATP (mADP), AMP, GDP, GMP and UTP. Involved in the biosynthesis of the central metabolite phospho-alpha-D-ribosyl-1-pyrophosphate (PRPP) via the transfer of pyrophosphoryl group from ATP to 1-hydroxyl of ribose-5-phosphate (Rib-5-P). The chain is Ribose-phosphate pyrophosphokinase from Bacillus subtilis (strain 168).